Reading from the N-terminus, the 390-residue chain is S-adenosylmethionine synthase 3 (390 aa).

Residue glutamate 9 participates in Mg(2+) binding. Residue histidine 15 participates in ATP binding. Glutamate 43 serves as a coordination point for K(+). Residues glutamate 56 and glutamine 99 each coordinate L-methionine. ATP contacts are provided by residues 167 to 169 (DGK), 235 to 238 (SGRF), aspartate 246, 252 to 253 (RK), alanine 269, lysine 273, and lysine 277. Position 246 (aspartate 246) interacts with L-methionine. Residue lysine 277 coordinates L-methionine.

This sequence belongs to the AdoMet synthase family. In terms of assembly, homotetramer. The cofactor is Mn(2+). It depends on Mg(2+) as a cofactor. Requires Co(2+) as cofactor. K(+) serves as cofactor. NH4(+) is required as a cofactor. Mostly expressed in roots, and, to a lower extent, in hypocotyls and cotyledons.

It localises to the cytoplasm. It catalyses the reaction L-methionine + ATP + H2O = S-adenosyl-L-methionine + phosphate + diphosphate. It functions in the pathway amino-acid biosynthesis; S-adenosyl-L-methionine biosynthesis; S-adenosyl-L-methionine from L-methionine: step 1/1. Its activity is regulated as follows. Inhibited by products of SAMS reaction (SAM, Pi, PPi), substrate analogs (cycloleucine and ethionine), and alternative nucleotides (GTP, CTP and ADP). Strongly repressed by PPPi. In terms of biological role, catalyzes the formation of S-adenosylmethionine from methionine and ATP. The reaction comprises two steps that are both catalyzed by the same enzyme: formation of S-adenosylmethionine (AdoMet) and triphosphate, and subsequent hydrolysis of the triphosphate. The protein is S-adenosylmethionine synthase 3 (SAMS3) of Catharanthus roseus (Madagascar periwinkle).